The primary structure comprises 320 residues: Acetyl-coenzyme A carboxylase carboxyl transferase subunit alpha (320 aa).

The region spanning 41 to 295 (RIEEKAGQAL…GDAIAQAFDE (255 aa)) is the CoA carboxyltransferase C-terminal domain.

This sequence belongs to the AccA family. As to quaternary structure, acetyl-CoA carboxylase is a heterohexamer composed of biotin carboxyl carrier protein (AccB), biotin carboxylase (AccC) and two subunits each of ACCase subunit alpha (AccA) and ACCase subunit beta (AccD).

Its subcellular location is the cytoplasm. It carries out the reaction N(6)-carboxybiotinyl-L-lysyl-[protein] + acetyl-CoA = N(6)-biotinyl-L-lysyl-[protein] + malonyl-CoA. It functions in the pathway lipid metabolism; malonyl-CoA biosynthesis; malonyl-CoA from acetyl-CoA: step 1/1. Its function is as follows. Component of the acetyl coenzyme A carboxylase (ACC) complex. First, biotin carboxylase catalyzes the carboxylation of biotin on its carrier protein (BCCP) and then the CO(2) group is transferred by the carboxyltransferase to acetyl-CoA to form malonyl-CoA. The sequence is that of Acetyl-coenzyme A carboxylase carboxyl transferase subunit alpha from Bradyrhizobium sp. (strain ORS 278).